Here is a 308-residue protein sequence, read N- to C-terminus: Pantothenate kinase (308 aa).

90-97 (GSVAVGKS) is a binding site for ATP.

The protein belongs to the prokaryotic pantothenate kinase family.

The protein resides in the cytoplasm. The catalysed reaction is (R)-pantothenate + ATP = (R)-4'-phosphopantothenate + ADP + H(+). The protein operates within cofactor biosynthesis; coenzyme A biosynthesis; CoA from (R)-pantothenate: step 1/5. This Sorangium cellulosum (strain So ce56) (Polyangium cellulosum (strain So ce56)) protein is Pantothenate kinase.